The chain runs to 227 residues: PKHD-type hydroxylase Swit_4046 (227 aa).

The Fe2OG dioxygenase domain occupies 78 to 178; that stretch reads KVFPPLFNLY…RLCSFFWIQS (101 aa). Residues His-96, Asp-98, and His-159 each coordinate Fe cation. Residue Arg-169 coordinates 2-oxoglutarate.

Fe(2+) serves as cofactor. L-ascorbate is required as a cofactor.

The chain is PKHD-type hydroxylase Swit_4046 from Rhizorhabdus wittichii (strain DSM 6014 / CCUG 31198 / JCM 15750 / NBRC 105917 / EY 4224 / RW1) (Sphingomonas wittichii).